Reading from the N-terminus, the 294-residue chain is 33 kDa chaperonin (294 aa).

Intrachain disulfides connect Cys-239–Cys-241 and Cys-272–Cys-275.

The protein belongs to the HSP33 family. Post-translationally, under oxidizing conditions two disulfide bonds are formed involving the reactive cysteines. Under reducing conditions zinc is bound to the reactive cysteines and the protein is inactive.

It is found in the cytoplasm. Its function is as follows. Redox regulated molecular chaperone. Protects both thermally unfolding and oxidatively damaged proteins from irreversible aggregation. Plays an important role in the bacterial defense system toward oxidative stress. This is 33 kDa chaperonin from Lacticaseibacillus casei (strain BL23) (Lactobacillus casei).